Here is a 369-residue protein sequence, read N- to C-terminus: 1-aminocyclopropane-1-carboxylate oxidase homolog 2 (369 aa).

The Fe2OG dioxygenase domain maps to lysine 217–histidine 318. Fe cation-binding residues include histidine 241, aspartate 243, and histidine 297.

Belongs to the iron/ascorbate-dependent oxidoreductase family. Requires Fe cation as cofactor.

This is 1-aminocyclopropane-1-carboxylate oxidase homolog 2 from Arabidopsis thaliana (Mouse-ear cress).